The primary structure comprises 370 residues: Protein Brevis radix-like 3 (370 aa).

The region spanning 140–221 is the BRX 1 domain; the sequence is KEWVAQVEPG…NFEKVMELYN (82 aa). 2 stretches are compositionally biased toward polar residues: residues 231–248 and 266–291; these read LQTPPVSEDGGSQIQSVK and PGSSGFASTPKLSSISGTKTETSSID. The tract at residues 231 to 316 is disordered; sequence LQTPPVSEDG…VSNASDMESE (86 aa). Residues 315–370 enclose the BRX 2 domain; sequence SEWVEQDEPGIYITIRALPDGNRELRRVRFSRDKFGETHARLWWEQNRARIQQQYL.

The protein belongs to the BRX family. Expressed in roots.

The protein resides in the nucleus. This Arabidopsis thaliana (Mouse-ear cress) protein is Protein Brevis radix-like 3 (BRXL3).